The chain runs to 891 residues: DNA mismatch repair protein MutS (891 aa).

Position 634 to 641 (634 to 641 (GPNMGGKS)) interacts with ATP.

This sequence belongs to the DNA mismatch repair MutS family.

This protein is involved in the repair of mismatches in DNA. It is possible that it carries out the mismatch recognition step. This protein has a weak ATPase activity. In Burkholderia pseudomallei (strain 668), this protein is DNA mismatch repair protein MutS.